Here is a 254-residue protein sequence, read N- to C-terminus: Ribosomal RNA small subunit methyltransferase J (254 aa).

Residues 107–108, 123–124, and aspartate 177 each bind S-adenosyl-L-methionine; these read RD and ER.

Belongs to the methyltransferase superfamily. RsmJ family.

The protein resides in the cytoplasm. It carries out the reaction guanosine(1516) in 16S rRNA + S-adenosyl-L-methionine = N(2)-methylguanosine(1516) in 16S rRNA + S-adenosyl-L-homocysteine + H(+). In terms of biological role, specifically methylates the guanosine in position 1516 of 16S rRNA. In Histophilus somni (strain 129Pt) (Haemophilus somnus), this protein is Ribosomal RNA small subunit methyltransferase J.